A 148-amino-acid polypeptide reads, in one-letter code: NADPH-dependent 7-cyano-7-deazaguanine reductase (148 aa).

Cys-50 functions as the Thioimide intermediate in the catalytic mechanism. Catalysis depends on Asp-57, which acts as the Proton donor. Residues 72–74 (VES) and 91–92 (HE) contribute to the substrate site.

It belongs to the GTP cyclohydrolase I family. QueF type 1 subfamily.

The protein localises to the cytoplasm. It carries out the reaction 7-aminomethyl-7-carbaguanine + 2 NADP(+) = 7-cyano-7-deazaguanine + 2 NADPH + 3 H(+). It participates in tRNA modification; tRNA-queuosine biosynthesis. Functionally, catalyzes the NADPH-dependent reduction of 7-cyano-7-deazaguanine (preQ0) to 7-aminomethyl-7-deazaguanine (preQ1). The protein is NADPH-dependent 7-cyano-7-deazaguanine reductase of Helicobacter pylori (strain G27).